The primary structure comprises 159 residues: 2-C-methyl-D-erythritol 2,4-cyclodiphosphate synthase (159 aa).

Residues aspartate 8 and histidine 10 each contribute to the a divalent metal cation site. 4-CDP-2-C-methyl-D-erythritol 2-phosphate contacts are provided by residues 8 to 10 (DVH) and 34 to 35 (HS). Histidine 42 contacts a divalent metal cation. 4-CDP-2-C-methyl-D-erythritol 2-phosphate is bound by residues 56–58 (DIG), 61–65 (FPDTD), 100–106 (AQAPKML), 132–135 (TTTE), phenylalanine 139, and arginine 142.

This sequence belongs to the IspF family. In terms of assembly, homotrimer. A divalent metal cation is required as a cofactor.

The enzyme catalyses 4-CDP-2-C-methyl-D-erythritol 2-phosphate = 2-C-methyl-D-erythritol 2,4-cyclic diphosphate + CMP. It functions in the pathway isoprenoid biosynthesis; isopentenyl diphosphate biosynthesis via DXP pathway; isopentenyl diphosphate from 1-deoxy-D-xylulose 5-phosphate: step 4/6. Functionally, involved in the biosynthesis of isopentenyl diphosphate (IPP) and dimethylallyl diphosphate (DMAPP), two major building blocks of isoprenoid compounds. Catalyzes the conversion of 4-diphosphocytidyl-2-C-methyl-D-erythritol 2-phosphate (CDP-ME2P) to 2-C-methyl-D-erythritol 2,4-cyclodiphosphate (ME-CPP) with a corresponding release of cytidine 5-monophosphate (CMP). This Klebsiella pneumoniae (strain 342) protein is 2-C-methyl-D-erythritol 2,4-cyclodiphosphate synthase.